A 196-amino-acid polypeptide reads, in one-letter code: Mitochondrial intermembrane space cysteine motif-containing protein MIX23 (196 aa).

Positions 99–114 match the Cx14C motif motif; it reads CEKEAAEMKNETDQQC. The Cx13C motif signature appears at 178-192; that stretch reads CEQNNDYLKEFTQFC.

It belongs to the MIX23 family.

The protein localises to the mitochondrion intermembrane space. Functionally, regulator of the mitochondrial protein import machinery that is localized in the mitochondrial intermembrane space (IMS) and facilitates the transport of proteins from the cytosol into the mitochondrial matrix. Not essential for mitochondrial protein import but induced and required when mitochondrial import is compromised. Stimulates or stabilizes the translocation into the mitochondria of proteins such as OXA1, ATP1 and COX12. This is Mitochondrial intermembrane space cysteine motif-containing protein MIX23 from Saccharomyces cerevisiae (strain ATCC 204508 / S288c) (Baker's yeast).